The chain runs to 195 residues: Thymidine kinase (195 aa).

ATP is bound by residues 9-16 (ATMNAGKS) and 89-92 (DEAQ). Glu-90 acts as the Proton acceptor in catalysis. Zn(2+) contacts are provided by Cys-147, Cys-149, Cys-184, and His-187.

It belongs to the thymidine kinase family. In terms of assembly, homotetramer.

Its subcellular location is the cytoplasm. It carries out the reaction thymidine + ATP = dTMP + ADP + H(+). This chain is Thymidine kinase, found in Rhizobium meliloti (strain 1021) (Ensifer meliloti).